Here is a 245-residue protein sequence, read N- to C-terminus: ATP synthase subunit b (245 aa).

Residues 3 to 23 (SFNLLTIVSSIVNLLALAWII) traverse the membrane as a helical segment.

This sequence belongs to the ATPase B chain family. In terms of assembly, F-type ATPases have 2 components, F(1) - the catalytic core - and F(0) - the membrane proton channel. F(1) has five subunits: alpha(3), beta(3), gamma(1), delta(1), epsilon(1). F(0) has three main subunits: a(1), b(2) and c(10-14). The alpha and beta chains form an alternating ring which encloses part of the gamma chain. F(1) is attached to F(0) by a central stalk formed by the gamma and epsilon chains, while a peripheral stalk is formed by the delta and b chains.

The protein localises to the cell inner membrane. Functionally, f(1)F(0) ATP synthase produces ATP from ADP in the presence of a proton or sodium gradient. F-type ATPases consist of two structural domains, F(1) containing the extramembraneous catalytic core and F(0) containing the membrane proton channel, linked together by a central stalk and a peripheral stalk. During catalysis, ATP synthesis in the catalytic domain of F(1) is coupled via a rotary mechanism of the central stalk subunits to proton translocation. Component of the F(0) channel, it forms part of the peripheral stalk, linking F(1) to F(0). This chain is ATP synthase subunit b, found in Dictyoglomus thermophilum (strain ATCC 35947 / DSM 3960 / H-6-12).